The primary structure comprises 216 residues: Pyridoxine/pyridoxamine 5'-phosphate oxidase (216 aa).

Substrate-binding positions include 12–15 (RREY) and Lys-70. Residues 65-70 (RLVLLK), 80-81 (YT), Arg-86, Lys-87, and Gln-109 contribute to the FMN site. Substrate-binding residues include Tyr-127, Arg-131, and Ser-135. Residues 144-145 (QS) and Trp-189 contribute to the FMN site. 195 to 197 (RMH) contributes to the substrate binding site. Arg-199 contacts FMN.

Belongs to the pyridoxamine 5'-phosphate oxidase family. Homodimer. FMN serves as cofactor.

The enzyme catalyses pyridoxamine 5'-phosphate + O2 + H2O = pyridoxal 5'-phosphate + H2O2 + NH4(+). The catalysed reaction is pyridoxine 5'-phosphate + O2 = pyridoxal 5'-phosphate + H2O2. Its pathway is cofactor metabolism; pyridoxal 5'-phosphate salvage; pyridoxal 5'-phosphate from pyridoxamine 5'-phosphate: step 1/1. It functions in the pathway cofactor metabolism; pyridoxal 5'-phosphate salvage; pyridoxal 5'-phosphate from pyridoxine 5'-phosphate: step 1/1. In terms of biological role, catalyzes the oxidation of either pyridoxine 5'-phosphate (PNP) or pyridoxamine 5'-phosphate (PMP) into pyridoxal 5'-phosphate (PLP). This is Pyridoxine/pyridoxamine 5'-phosphate oxidase from Sodalis glossinidius (strain morsitans).